The following is a 113-amino-acid chain: Small ribosomal subunit protein uS14m (113 aa).

Belongs to the universal ribosomal protein uS14 family. In terms of assembly, component of the mitochondrial small ribosomal subunit (mt-SSU). Mature N.crassa 74S mitochondrial ribosomes consist of a small (37S) and a large (54S) subunit. The 37S small subunit contains a 16S ribosomal RNA (16S mt-rRNA) and 32 different proteins. The 54S large subunit contains a 23S rRNA (23S mt-rRNA) and 42 different proteins.

It localises to the mitochondrion. In terms of biological role, component of the mitochondrial ribosome (mitoribosome), a dedicated translation machinery responsible for the synthesis of mitochondrial genome-encoded proteins, including at least some of the essential transmembrane subunits of the mitochondrial respiratory chain. The mitoribosomes are attached to the mitochondrial inner membrane and translation products are cotranslationally integrated into the membrane. The polypeptide is Small ribosomal subunit protein uS14m (mrp2) (Neurospora crassa (strain ATCC 24698 / 74-OR23-1A / CBS 708.71 / DSM 1257 / FGSC 987)).